Here is a 253-residue protein sequence, read N- to C-terminus: Succinate dehydrogenase iron-sulfur subunit (253 aa).

[2Fe-2S] cluster-binding residues include Cys-64, Cys-69, and Cys-84. The 4Fe-4S ferredoxin-type domain occupies 146-174 (RQWAYELSKCMTCGVCLEACPNVNSKSKF). [4Fe-4S] cluster-binding residues include Cys-155, Cys-158, and Cys-161. The [3Fe-4S] cluster site is built by Cys-165, Cys-212, and Cys-218. Cys-222 is a [4Fe-4S] cluster binding site.

It belongs to the succinate dehydrogenase/fumarate reductase iron-sulfur protein family. In B.subtilis succinate dehydrogenase forms part of an enzyme complex containing three subunits: a flavoprotein, an iron-sulfur protein and cytochrome b-558. [2Fe-2S] cluster serves as cofactor. The cofactor is [3Fe-4S] cluster. Requires [4Fe-4S] cluster as cofactor.

The catalysed reaction is a quinone + succinate = fumarate + a quinol. Its pathway is carbohydrate metabolism; tricarboxylic acid cycle; fumarate from succinate (bacterial route): step 1/1. In Bacillus subtilis (strain 168), this protein is Succinate dehydrogenase iron-sulfur subunit (sdhB).